The sequence spans 356 residues: Alanine racemase, catabolic (356 aa).

The active-site Proton acceptor; specific for D-alanine is the Lys35. Position 35 is an N6-(pyridoxal phosphate)lysine (Lys35). Arg130 lines the substrate pocket. Tyr253 serves as the catalytic Proton acceptor; specific for L-alanine. Position 301 (Met301) interacts with substrate.

This sequence belongs to the alanine racemase family. The cofactor is pyridoxal 5'-phosphate.

It carries out the reaction L-alanine = D-alanine. In terms of biological role, isomerizes L-alanine to D-alanine which is then oxidized to pyruvate by DadA. The polypeptide is Alanine racemase, catabolic (dadX) (Escherichia coli (strain K12)).